The sequence spans 230 residues: Phosphoglycolate phosphatase (230 aa).

The active-site Nucleophile is the aspartate 9. Residues aspartate 9, aspartate 11, and aspartate 175 each contribute to the Mg(2+) site.

The protein belongs to the HAD-like hydrolase superfamily. CbbY/CbbZ/Gph/YieH family. The cofactor is Mg(2+).

It catalyses the reaction 2-phosphoglycolate + H2O = glycolate + phosphate. It participates in organic acid metabolism; glycolate biosynthesis; glycolate from 2-phosphoglycolate: step 1/1. Functionally, specifically catalyzes the dephosphorylation of 2-phosphoglycolate. Is involved in the dissimilation of the intracellular 2-phosphoglycolate formed during the DNA repair of 3'-phosphoglycolate ends, a major class of DNA lesions induced by oxidative stress. In Psychrobacter arcticus (strain DSM 17307 / VKM B-2377 / 273-4), this protein is Phosphoglycolate phosphatase.